The chain runs to 314 residues: Regulator of microtubule dynamics protein 1 (314 aa).

The residue at position 165 (Lys165) is an N6-succinyllysine. TPR repeat units lie at residues 168–204 (AICL…NPKD) and 222–258 (PWYQ…DPNF).

It belongs to the RMDN family. As to quaternary structure, interacts with microtubules.

The protein resides in the cytoplasm. Its subcellular location is the cytoskeleton. It localises to the spindle. The protein localises to the spindle pole. The sequence is that of Regulator of microtubule dynamics protein 1 (RMDN1) from Homo sapiens (Human).